Consider the following 373-residue polypeptide: tRNA-specific 2-thiouridylase MnmA (373 aa).

Residues 12-19 (GMSGGVDS) and M38 contribute to the ATP site. An interaction with target base in tRNA region spans residues 98–100 (NPD). The Nucleophile role is filled by C103. Cysteines 103 and 200 form a disulfide. G127 provides a ligand contact to ATP. The interaction with tRNA stretch occupies residues 150–152 (KDQ). C200 (cysteine persulfide intermediate) is an active-site residue. Positions 312–313 (RY) are interaction with tRNA.

The protein belongs to the MnmA/TRMU family.

Its subcellular location is the cytoplasm. It carries out the reaction S-sulfanyl-L-cysteinyl-[protein] + uridine(34) in tRNA + AH2 + ATP = 2-thiouridine(34) in tRNA + L-cysteinyl-[protein] + A + AMP + diphosphate + H(+). Its function is as follows. Catalyzes the 2-thiolation of uridine at the wobble position (U34) of tRNA, leading to the formation of s(2)U34. The sequence is that of tRNA-specific 2-thiouridylase MnmA from Streptococcus pneumoniae (strain ATCC 700669 / Spain 23F-1).